The chain runs to 433 residues: 3-phosphoshikimate 1-carboxyvinyltransferase (433 aa).

Lys-22, Ser-23, and Arg-27 together coordinate 3-phosphoshikimate. Lys-22 serves as a coordination point for phosphoenolpyruvate. Gly-95 and Arg-123 together coordinate phosphoenolpyruvate. Ser-167, Gln-169, Asp-315, and Lys-342 together coordinate 3-phosphoshikimate. Gln-169 lines the phosphoenolpyruvate pocket. The active-site Proton acceptor is Asp-315. Positions 346 and 387 each coordinate phosphoenolpyruvate.

The protein belongs to the EPSP synthase family. Monomer.

Its subcellular location is the cytoplasm. It catalyses the reaction 3-phosphoshikimate + phosphoenolpyruvate = 5-O-(1-carboxyvinyl)-3-phosphoshikimate + phosphate. Its pathway is metabolic intermediate biosynthesis; chorismate biosynthesis; chorismate from D-erythrose 4-phosphate and phosphoenolpyruvate: step 6/7. Catalyzes the transfer of the enolpyruvyl moiety of phosphoenolpyruvate (PEP) to the 5-hydroxyl of shikimate-3-phosphate (S3P) to produce enolpyruvyl shikimate-3-phosphate and inorganic phosphate. This Legionella pneumophila (strain Corby) protein is 3-phosphoshikimate 1-carboxyvinyltransferase.